A 464-amino-acid chain; its full sequence is Cysteine--tRNA ligase (464 aa).

Zn(2+) is bound at residue C27. The 'HIGH' region motif lies at 29-39 (PTVYNYFHIGN). 3 residues coordinate Zn(2+): C207, H232, and E236. The 'KMSKS' region motif lies at 264–268 (KMSKS). K267 serves as a coordination point for ATP.

Belongs to the class-I aminoacyl-tRNA synthetase family. As to quaternary structure, monomer. Requires Zn(2+) as cofactor.

It localises to the cytoplasm. It catalyses the reaction tRNA(Cys) + L-cysteine + ATP = L-cysteinyl-tRNA(Cys) + AMP + diphosphate. The chain is Cysteine--tRNA ligase from Alkaliphilus oremlandii (strain OhILAs) (Clostridium oremlandii (strain OhILAs)).